Reading from the N-terminus, the 307-residue chain is Glycerol-3-phosphate dehydrogenase [NAD(P)+] (307 aa).

NADPH-binding residues include tryptophan 14, arginine 34, arginine 35, and lysine 82. Sn-glycerol 3-phosphate is bound by residues lysine 82 and glycine 110. Serine 114 contacts NADPH. The sn-glycerol 3-phosphate site is built by lysine 165, aspartate 218, serine 228, arginine 229, and asparagine 230. Lysine 165 (proton acceptor) is an active-site residue. Residue arginine 229 participates in NADPH binding. Glutamate 255 provides a ligand contact to NADPH.

This sequence belongs to the NAD-dependent glycerol-3-phosphate dehydrogenase family.

The protein localises to the cytoplasm. The enzyme catalyses sn-glycerol 3-phosphate + NAD(+) = dihydroxyacetone phosphate + NADH + H(+). The catalysed reaction is sn-glycerol 3-phosphate + NADP(+) = dihydroxyacetone phosphate + NADPH + H(+). It participates in membrane lipid metabolism; glycerophospholipid metabolism. Functionally, catalyzes the reduction of the glycolytic intermediate dihydroxyacetone phosphate (DHAP) to sn-glycerol 3-phosphate (G3P), the key precursor for phospholipid synthesis. The polypeptide is Glycerol-3-phosphate dehydrogenase [NAD(P)+] (Trichormus variabilis (strain ATCC 29413 / PCC 7937) (Anabaena variabilis)).